A 136-amino-acid chain; its full sequence is Mitochondrial pyruvate carrier 1-like protein (136 aa).

The Mitochondrial matrix segment spans residues 2-19 (ARMAVLWRKMRDNFQSKE). A helical membrane pass occupies residues 20 to 42 (FREYVSSTHFWGPAFSWGLPLAA). At 43–51 (FKDMKASPE) the chain is on the mother cell cytoplasmic side. The chain crosses the membrane as a helical span at residues 52 to 74 (IISGRMTTALILYSAIFMRFAYR). The Mitochondrial matrix portion of the chain corresponds to 75-136 (VQPRNLLLMA…PGSQPPKQAS (62 aa)). A disordered region spans residues 111–136 (EAKARDPPATAAAATSPGSQPPKQAS). Low complexity predominate over residues 117-136 (PPATAAAATSPGSQPPKQAS).

This sequence belongs to the mitochondrial pyruvate carrier (MPC) (TC 2.A.105) family.

The protein localises to the mitochondrion inner membrane. The catalysed reaction is pyruvate(out) + H(+)(out) = pyruvate(in) + H(+)(in). Mediates the uptake of pyruvate into mitochondria. In Homo sapiens (Human), this protein is Mitochondrial pyruvate carrier 1-like protein (MPC1L).